A 247-amino-acid polypeptide reads, in one-letter code: NH(3)-dependent NAD(+) synthetase (247 aa).

29–36 (GISGGIDS) lines the ATP pocket. Asp-35 serves as a coordination point for Mg(2+). Deamido-NAD(+) is bound at residue Arg-120. Thr-140 provides a ligand contact to ATP. Mg(2+) is bound at residue Glu-145. Deamido-NAD(+) is bound by residues Lys-153 and Asp-160. 2 residues coordinate ATP: Lys-169 and Ser-191. Deamido-NAD(+) is bound at residue 237–238 (HK).

The protein belongs to the NAD synthetase family. Homodimer.

It carries out the reaction deamido-NAD(+) + NH4(+) + ATP = AMP + diphosphate + NAD(+) + H(+). It participates in cofactor biosynthesis; NAD(+) biosynthesis; NAD(+) from deamido-NAD(+) (ammonia route): step 1/1. Its function is as follows. Catalyzes the ATP-dependent amidation of deamido-NAD to form NAD. Uses ammonia as a nitrogen source. The protein is NH(3)-dependent NAD(+) synthetase of Alkaliphilus metalliredigens (strain QYMF).